The following is a 534-amino-acid chain: Cytidylyl-2-hydroxyethylphosphonate methyltransferase (534 aa).

In terms of domain architecture, B12-binding spans 38–195 (KVLLLNPSAT…EHLNGNVSDD (158 aa)). Positions 268 to 496 (TVGSRVGQLY…TYKQGIINVP (229 aa)) constitute a Radical SAM core domain. Positions 282, 286, and 289 each coordinate [4Fe-4S] cluster.

Belongs to the radical SAM superfamily. It depends on [4Fe-4S] cluster as a cofactor. Methylcob(III)alamin serves as cofactor.

The catalysed reaction is cytidine 5'-{[hydroxy(2-hydroxyethyl)phosphonoyl]phosphate} + AH2 + 2 S-adenosyl-L-methionine = cytidine 5'-({hydroxy[(S)-2-hydroxypropyl]phosphonoyl}phosphate) + 5'-deoxyadenosine + L-methionine + A + S-adenosyl-L-homocysteine + 2 H(+). It functions in the pathway antibiotic biosynthesis; fosfomycin biosynthesis. In terms of biological role, involved in fosfomycin biosynthesis. Catalyzes the C-methylation of cytidylyl-2-hydroxyethylphosphonate (HEP-CMP) to form cytidylyl-2-hydroxypropylphosphonate (HPP-CMP). The C-methylation is not stereoselective and the ratio of (S)- to (R)-HPP-CMP is almost equal in vitro. This is Cytidylyl-2-hydroxyethylphosphonate methyltransferase from Streptomyces wedmorensis.